Consider the following 242-residue polypeptide: MKTFHGPTFGTAVFLYLLLFLTSALEEGEITSKVKFPPSSSPSFPRLVMVGTLPDLQEITLCYWFKVNHLKSTLTIFSYNTAKNDNELLTSLEKQGAFHMNVHGAPQLKVQCPNKIHIGKWHHVCHTWSSWEGEATIGVDGFHCKGNATGIAMGVTLSQGGLVVLGQEQDSVGGEYDAEQSLEGELSELNLWNTVLNHEQIKHLSKCAHPSERHIHGNIIQWDKTQFQAYDGVVLSPNEICA.

An N-terminal signal peptide occupies residues 1 to 24; the sequence is MKTFHGPTFGTAVFLYLLLFLTSA. The region spanning 30–241 is the Pentraxin (PTX) domain; that stretch reads ITSKVKFPPS…GVVLSPNEIC (212 aa). Phosphocholine is bound by residues Thr-60 and Tyr-63. 2 cysteine pairs are disulfide-bonded: Cys-62-Cys-125 and Cys-112-Cys-144. Asp-85 and Asn-86 together coordinate Ca(2+). A glycan (N-linked (GlcNAc...) asparagine) is linked at Asn-147. Positions 168, 169, 170, and 180 each coordinate Ca(2+). A disulfide bridge links Cys-207 with Cys-241.

It belongs to the pentraxin family. As to quaternary structure, homopentamer. Pentraxin (or pentaxin) have a discoid arrangement of 5 non-covalently bound subunits. Requires Ca(2+) as cofactor.

The protein localises to the secreted. In terms of biological role, might serve the role of immunoglobulins. This Limulus polyphemus (Atlantic horseshoe crab) protein is C-reactive protein 1.4.